The chain runs to 404 residues: MRSQPHVLGIVLAGGEGKRLYPLTADRAKPAVPFGGAYRLIDFVLSNLVNAGYLRLCVLTQYKSHSLDRHISQTWRLSGFAGEYITPVPAQQRLGPRWYTGSADAILQSLNLVYDEDPEYIVVFGADHVYRMDPEQMVQHHIESGAGVTVAGIRVPRSEAFAFGCIDSDESGRIVQFLEKPAHPPGTPDDPNMTFASMGNYVFTTKVLVDAIRADSENSDSDHDMGGDIIPALVEAGEASVYDFKDNVVPGATDRDRGYWRDVGTLDAFYDAHMDLVSVHPIFNLYNRRWPIRGETENLAPAKFVQGGLAQESVVGAGCILSAATVRNSVLSSNVMVDSGATVEGSVLMPGVRIGKGAVVRRAILDKNVVVGDGEIIGVDLERDKQRFAVSNGGVVAIGKGVWI.

Alpha-D-glucose 1-phosphate contacts are provided by residues Tyr-99, Gly-164, 179–180 (EK), and Ser-197.

It belongs to the bacterial/plant glucose-1-phosphate adenylyltransferase family. As to quaternary structure, homotetramer.

It carries out the reaction alpha-D-glucose 1-phosphate + ATP + H(+) = ADP-alpha-D-glucose + diphosphate. Its pathway is glycan biosynthesis; glycogen biosynthesis. Its function is as follows. Involved in the biosynthesis of ADP-glucose, a building block required for the elongation reactions to produce glycogen. Catalyzes the reaction between ATP and alpha-D-glucose 1-phosphate (G1P) to produce pyrophosphate and ADP-Glc. This is Glucose-1-phosphate adenylyltransferase from Rhodococcus opacus (strain B4).